We begin with the raw amino-acid sequence, 287 residues long: Ribonuclease Z (287 aa).

The Zn(2+) site is built by His-64, His-66, Asp-68, His-69, His-124, Asp-191, and His-250. Asp-68 acts as the Proton acceptor in catalysis.

Belongs to the RNase Z family. As to quaternary structure, homodimer. Zn(2+) serves as cofactor.

The catalysed reaction is Endonucleolytic cleavage of RNA, removing extra 3' nucleotides from tRNA precursor, generating 3' termini of tRNAs. A 3'-hydroxy group is left at the tRNA terminus and a 5'-phosphoryl group is left at the trailer molecule.. Its function is as follows. Zinc phosphodiesterase, which displays some tRNA 3'-processing endonuclease activity. Probably involved in tRNA maturation, by removing a 3'-trailer from precursor tRNA. In Pyrobaculum calidifontis (strain DSM 21063 / JCM 11548 / VA1), this protein is Ribonuclease Z.